Reading from the N-terminus, the 415-residue chain is Histidine--tRNA ligase (415 aa).

It belongs to the class-II aminoacyl-tRNA synthetase family. As to quaternary structure, homodimer.

It is found in the cytoplasm. It carries out the reaction tRNA(His) + L-histidine + ATP = L-histidyl-tRNA(His) + AMP + diphosphate + H(+). This is Histidine--tRNA ligase from Clostridium perfringens (strain ATCC 13124 / DSM 756 / JCM 1290 / NCIMB 6125 / NCTC 8237 / Type A).